The sequence spans 237 residues: NAD-dependent protein deacylase (237 aa).

Residues 1 to 235 (MRIAVLSGAG…PGLLQRLPAL (235 aa)) form the Deacetylase sirtuin-type domain. Residue 8–28 (GAGISAESGVPTFRDDKNGLW) coordinates NAD(+). Tyrosine 53 and arginine 56 together coordinate substrate. 86 to 89 (QNVD) contributes to the NAD(+) binding site. Residue histidine 104 is the Proton acceptor of the active site. Zn(2+) contacts are provided by cysteine 112, cysteine 115, cysteine 138, and cysteine 140. Residues 177–179 (GTS), 203–205 (NPE), and alanine 221 contribute to the NAD(+) site.

Belongs to the sirtuin family. Class III subfamily. Zn(2+) is required as a cofactor.

Its subcellular location is the cytoplasm. The catalysed reaction is N(6)-acetyl-L-lysyl-[protein] + NAD(+) + H2O = 2''-O-acetyl-ADP-D-ribose + nicotinamide + L-lysyl-[protein]. It carries out the reaction N(6)-succinyl-L-lysyl-[protein] + NAD(+) + H2O = 2''-O-succinyl-ADP-D-ribose + nicotinamide + L-lysyl-[protein]. Functionally, NAD-dependent lysine deacetylase and desuccinylase that specifically removes acetyl and succinyl groups on target proteins. Modulates the activities of several proteins which are inactive in their acylated form. The sequence is that of NAD-dependent protein deacylase from Mycolicibacterium paratuberculosis (strain ATCC BAA-968 / K-10) (Mycobacterium paratuberculosis).